Here is a 519-residue protein sequence, read N- to C-terminus: GATA zinc finger domain-containing protein 8 (519 aa).

Disordered regions lie at residues 25 to 182, 198 to 249, 273 to 359, and 431 to 453; these read YSTG…SSSG, SNIN…SNNT, SNNM…NNKQ, and DERQ…KRRE. Low complexity predominate over residues 37–156; that stretch reads TNNSQNKTNN…SSSITSPSSN (120 aa). Over residues 172–182 the composition is skewed to polar residues; that stretch reads SPNNKQVSSSG. The span at 273-357 shows a compositional bias: low complexity; that stretch reads SNNMNINNQH…SNINNNNNNN (85 aa). Residues 429-461 adopt a coiled-coil conformation; that stretch reads KTDERQQKKRMESDKNAEKREKRREASRLLNNV. The segment at 462 to 487 adopts a GATA-type zinc-finger fold; that stretch reads CRNCKTTETPEWRKGPDGTKSLCNAC.

The sequence is that of GATA zinc finger domain-containing protein 8 (gtaH) from Dictyostelium discoideum (Social amoeba).